Here is a 72-residue protein sequence, read N- to C-terminus: Translation initiation factor IF-1 (72 aa).

One can recognise an S1-like domain in the interval M1 to K72.

The protein belongs to the IF-1 family. Component of the 30S ribosomal translation pre-initiation complex which assembles on the 30S ribosome in the order IF-2 and IF-3, IF-1 and N-formylmethionyl-tRNA(fMet); mRNA recruitment can occur at any time during PIC assembly.

The protein localises to the cytoplasm. In terms of biological role, one of the essential components for the initiation of protein synthesis. Stabilizes the binding of IF-2 and IF-3 on the 30S subunit to which N-formylmethionyl-tRNA(fMet) subsequently binds. Helps modulate mRNA selection, yielding the 30S pre-initiation complex (PIC). Upon addition of the 50S ribosomal subunit IF-1, IF-2 and IF-3 are released leaving the mature 70S translation initiation complex. In Levilactobacillus brevis (strain ATCC 367 / BCRC 12310 / CIP 105137 / JCM 1170 / LMG 11437 / NCIMB 947 / NCTC 947) (Lactobacillus brevis), this protein is Translation initiation factor IF-1.